Reading from the N-terminus, the 908-residue chain is MEEGGRDKTPVQSQQPSATAPSGADEKSSGKERRDAGEKDKEQELSEEDKQLQDELEMLVERLGEKDTSLYRPALEELRRQIRSSTTSMTSVPKPLKFLRPHYGKLKEIYENMAPGENKCFAADIISVLAMTMSGERECLKYRLVGSQEELASWGHEYVRHLAGEVAKEWQELDDAEKAQREPLLTLVKEIVPYNMAHNAEHEACDLLMEIEQVDMLEKDIDENAYSKVCLYLTSCVNYVPEPENSALLRCALGVFRKFSRFPEALRLALMLNDMELVEDIFTSCKDVVVQKQMAFMLGRHGVFLELSEDVEEYEDLTEIMSNVQLNSNFLALARELDIMEPKVPDDIYKTHLENNRFGGSGSQVDSARMNLASSFVNGFVNAAFGQDKLLTDDGNKWLYKNKDHGMLSAAASLGMILLWDVDGGLTQIDKYLYSSEDYIKSGALLACGIVNSGVRNECDPALALLSDYVLHNSNTMRLGSIFGLGLAYAGSNREDVLTLLLPVMGDSKSSMEVAGVTALACGMIAVGSCNGDVTSTILQTIMEKSETELKDTYARWLPLGLGLNHLGKGEAIEAILAALEVVSEPFRSFANTLVDVCAYAGSGNVLKVQQLLHICSEHFDSKEKEEDKDKKEKKDKDKKEAPADMGAHQGVAVLGIALIAMGEEIGAEMALRTFGHLLRYGEPTLRRAVPLALALISVSNPRLNILDTLSKFSHDADPEVSYNSIFAMGMVGSGTNNARLAAMLRQLAQYHAKDPNNLFMVRLAQGLTHLGKGTLTLCPYHSDRQLMSQVAVAGLLTVLVSFLDVRNIILGKSHYVLYGLVAAMQPRMLVTFDEELRPLPVSVRVGQAVDVVGQAGKPKTITGFQTHTTPVLLAHGERAELATEEFLPVTPILEGFVILRKNPNYNL.

N-acetylmethionine is present on Met1. The segment at 1 to 51 (MEEGGRDKTPVQSQQPSATAPSGADEKSSGKERRDAGEKDKEQELSEEDKQ) is disordered. Thr9 is subject to Phosphothreonine. Residues 10–20 (PVQSQQPSATA) show a composition bias toward polar residues. Over residues 24–51 (ADEKSSGKERRDAGEKDKEQELSEEDKQ) the composition is skewed to basic and acidic residues. 2 positions are modified to phosphoserine: Ser29 and Ser147. Tyr194 is modified (phosphotyrosine). Phosphoserine is present on residues Ser361 and Ser363. PC repeat units lie at residues 409–442 (SAAA…YIKS), 443–479 (GALL…TMRL), 480–514 (GSIF…SMEV), 517–551 (VTAL…TELK), and 560–589 (LGLG…PFRS). The residue at position 551 (Lys551) is an N6-acetyllysine. A compositionally biased stretch (basic and acidic residues) spans 623 to 643 (KEKEEDKDKKEKKDKDKKEAP). Residues 623 to 645 (KEKEEDKDKKEKKDKDKKEAPAD) are disordered. PC repeat units follow at residues 692–723 (LALA…EVSY) and 742–757 (AAML…KDPN). A required for interaction with UBLCP1 region spans residues 708–903 (DTLSKFSHDA…LEGFVILRKN (196 aa)).

The protein belongs to the proteasome subunit S2 family. In terms of assembly, component of the 19S proteasome regulatory particle complex. The 26S proteasome consists of a 20S core particle (CP) and two 19S regulatory subunits (RP). The regulatory particle is made of a lid composed of 9 subunits, a base containing 6 ATPases and few additional components including PSMD2. Interacts with RPGRIP1L. Interacts with CRY1 in a KDM8-dependent manner. Interacts (via C-terminus) with phosphatase UBLCP1 (via ubiquitin-like domain); the interaction recruits UBLCP1 to the 19S regulatory particle where it dephosphorylates 19S subunit PSMC2/RPT1 which impairs PSMC2 ATPase activity and disrupts 26S proteasome assembly.

Its function is as follows. Component of the 26S proteasome, a multiprotein complex involved in the ATP-dependent degradation of ubiquitinated proteins. This complex plays a key role in the maintenance of protein homeostasis by removing misfolded or damaged proteins, which could impair cellular functions, and by removing proteins whose functions are no longer required. Therefore, the proteasome participates in numerous cellular processes, including cell cycle progression, apoptosis, or DNA damage repair. In terms of biological role, binds to the intracellular domain of tumor necrosis factor type 1 receptor. The binding domain of TRAP1 and TRAP2 resides outside the death domain of TNFR1. The polypeptide is 26S proteasome non-ATPase regulatory subunit 2 (Psmd2) (Rattus norvegicus (Rat)).